Reading from the N-terminus, the 122-residue chain is Large ribosomal subunit protein uL14 (122 aa).

It belongs to the universal ribosomal protein uL14 family. In terms of assembly, part of the 50S ribosomal subunit. Forms a cluster with proteins L3 and L19. In the 70S ribosome, L14 and L19 interact and together make contacts with the 16S rRNA in bridges B5 and B8.

In terms of biological role, binds to 23S rRNA. Forms part of two intersubunit bridges in the 70S ribosome. This Maridesulfovibrio salexigens (strain ATCC 14822 / DSM 2638 / NCIMB 8403 / VKM B-1763) (Desulfovibrio salexigens) protein is Large ribosomal subunit protein uL14.